The following is a 334-amino-acid chain: HTH-type transcriptional repressor PurR (334 aa).

In terms of domain architecture, HTH lacI-type spans 2-56 (ATIKDVARLAGVSTTTVSHVINKTRFVAEATQEKVMKAVDELNYAPSAVARSLKC). Residues 4-23 (IKDVARLAGVSTTTVSHVIN) constitute a DNA-binding region (H-T-H motif). Residues 48 to 56 (SAVARSLKC) mediate DNA binding. Hypoxanthine is bound by residues phenylalanine 73, lysine 189, phenylalanine 220, and aspartate 274.

As to quaternary structure, homodimer.

It functions in the pathway purine metabolism; purine nucleotide biosynthesis [regulation]. Is the main repressor of the genes involved in the de novo synthesis of purine nucleotides, regulating purB, purC, purEK, purF, purHD, purL, purMN and guaBA expression. PurR is allosterically activated to bind its cognate DNA by binding the purine corepressors, hypoxanthine or guanine, thereby effecting transcription repression. In Vibrio vulnificus (strain CMCP6), this protein is HTH-type transcriptional repressor PurR.